Reading from the N-terminus, the 501-residue chain is Nuclear receptor subfamily 5 group A member 2 (501 aa).

Residues 43 to 114 (EELCPVCGDK…KCLSVGMKLE (72 aa)) constitute a DNA-binding region (nuclear receptor). Residues cysteine 46, cysteine 49, cysteine 63, cysteine 66, cysteine 82, cysteine 88, cysteine 98, and cysteine 101 each contribute to the Zn(2+) site. NR C4-type zinc fingers lie at residues 46–66 (CPVCGDKVSGYHYGLLTCESC) and 82–106 (CIENQNCQIDKTQRKRCPYCRFQKC). The C-terminal extension (CTE) stretch occupies residues 112 to 127 (KLEAVRADRMRGGRNK). The short motif at 128–147 (FGPMYKRDRALKQQKKALIR) is the FTZ-F1 box element. A disordered region spans residues 186-207 (NHTALPPTDYDRSPFVTSPISM). Residues 260-499 (SIPHLILELQ…NLLIEMLHAK (240 aa)) enclose the NR LBD domain. A phospholipid derivative contacts are provided by residues 381-384 (GATL), tyrosine 476, and lysine 480. The AF-2 stretch occupies residues 488–499 (CNNLLIEMLHAK).

The protein belongs to the nuclear hormone receptor family. NR5 subfamily. In terms of assembly, monomer; Binds DNA as a monomer. In terms of tissue distribution, detected in liver and adrenal gland.

The protein localises to the nucleus. It localises to the chromosome. Its function is as follows. Orphan nuclear receptor that binds DNA as a monomer to the 5'-TCAAGGCCA-3' sequence and controls expression of target genes: regulates key biological processes, such as cholesterol and bile acid synthesis pathways, as well as cartilage, liver and pancreas morphogenesis. Ligand-binding causes conformational change which causes recruitment of coactivators, promoting target gene activation. The specific ligand is unknown, but specific phospholipids, such as phosphatidylethanolamine, phosphatidylserine, dilauroyl phosphatidylcholine and diundecanoyl phosphatidylcholine can act as ligand in vitro. Acts as a pioneer transcription factor, which unwraps target DNA from histones and elicits local opening of closed chromatin. Involved in the formation of connective tissue in lower jaw. The polypeptide is Nuclear receptor subfamily 5 group A member 2 (Gallus gallus (Chicken)).